A 367-amino-acid chain; its full sequence is MSKASDMVRTEVTRPSPYNSGLTITEVMQRYAPARIAKLGSNENPLGPSPTLATMLQAGAEMFRLYPDPAGRELRQAIAAKYGFGEDQIILGNGSEDLLSVISRAVLRPGDSVVTLYPSFPLHEDYATLMGASVKRVTVNDDLTINADALIDAVRERPRMLLFSNPMNPVGSWLSAGDLSKVLDAVSDETLIVVDEAYAEYAEGDDYASSLPDLCERDQPWIVLRTFSKAFGLAGLRIGFGIVGDPELRALLDRVRTPFNANGMAQAAALAALADEEHLAKVVALAKAERTQVESLLRNMGFDVAPSRGNFLFFNCRQNASAFAEGLLREGVIVKPWKQEGFDSYVRVSIGSPAENDHFMAALSQLL.

N6-(pyridoxal phosphate)lysine is present on Lys229.

It belongs to the class-II pyridoxal-phosphate-dependent aminotransferase family. Histidinol-phosphate aminotransferase subfamily. Homodimer. The cofactor is pyridoxal 5'-phosphate.

It carries out the reaction L-histidinol phosphate + 2-oxoglutarate = 3-(imidazol-4-yl)-2-oxopropyl phosphate + L-glutamate. It functions in the pathway amino-acid biosynthesis; L-histidine biosynthesis; L-histidine from 5-phospho-alpha-D-ribose 1-diphosphate: step 7/9. The sequence is that of Histidinol-phosphate aminotransferase 1 (hisC1) from Mesorhizobium japonicum (strain LMG 29417 / CECT 9101 / MAFF 303099) (Mesorhizobium loti (strain MAFF 303099)).